We begin with the raw amino-acid sequence, 351 residues long: Sulfate/thiosulfate import ATP-binding protein CysA (351 aa).

An ABC transporter domain is found at 3-237; sequence ITVRNLHKRF…PRSAFVYEFL (235 aa). Position 35–42 (35–42) interacts with ATP; sequence GPSGCGKT.

The protein belongs to the ABC transporter superfamily. Sulfate/tungstate importer (TC 3.A.1.6) family. As to quaternary structure, the complex is composed of two ATP-binding proteins (CysA), two transmembrane proteins (CysT and CysW) and a solute-binding protein (CysP).

The protein resides in the cell inner membrane. It carries out the reaction sulfate(out) + ATP + H2O = sulfate(in) + ADP + phosphate + H(+). The enzyme catalyses thiosulfate(out) + ATP + H2O = thiosulfate(in) + ADP + phosphate + H(+). Its function is as follows. Part of the ABC transporter complex CysAWTP involved in sulfate/thiosulfate import. Responsible for energy coupling to the transport system. The polypeptide is Sulfate/thiosulfate import ATP-binding protein CysA (Burkholderia mallei (strain ATCC 23344)).